The chain runs to 392 residues: Formate-dependent phosphoribosylglycinamide formyltransferase (392 aa).

Residues 22-23 (EL) and glutamate 82 each bind N(1)-(5-phospho-beta-D-ribosyl)glycinamide. ATP is bound by residues arginine 114, lysine 155, 160 to 165 (SSGKGQ), 195 to 198 (EGVV), and glutamate 203. The ATP-grasp domain occupies 119 to 308 (RLAAEELGLP…EFALHVRAFL (190 aa)). 2 residues coordinate Mg(2+): glutamate 267 and glutamate 279. N(1)-(5-phospho-beta-D-ribosyl)glycinamide contacts are provided by residues aspartate 286, lysine 355, and 362 to 363 (RR).

This sequence belongs to the PurK/PurT family. As to quaternary structure, homodimer.

The enzyme catalyses N(1)-(5-phospho-beta-D-ribosyl)glycinamide + formate + ATP = N(2)-formyl-N(1)-(5-phospho-beta-D-ribosyl)glycinamide + ADP + phosphate + H(+). It functions in the pathway purine metabolism; IMP biosynthesis via de novo pathway; N(2)-formyl-N(1)-(5-phospho-D-ribosyl)glycinamide from N(1)-(5-phospho-D-ribosyl)glycinamide (formate route): step 1/1. In terms of biological role, involved in the de novo purine biosynthesis. Catalyzes the transfer of formate to 5-phospho-ribosyl-glycinamide (GAR), producing 5-phospho-ribosyl-N-formylglycinamide (FGAR). Formate is provided by PurU via hydrolysis of 10-formyl-tetrahydrofolate. The polypeptide is Formate-dependent phosphoribosylglycinamide formyltransferase (Salmonella typhimurium (strain LT2 / SGSC1412 / ATCC 700720)).